The following is a 412-amino-acid chain: MPSPRVLGLVLAGGAGRRLAPLTADRAKPAVPFGGLYRLIDFVLSNLVNAGYLRIAVLTQYKSHSLDRHITTTWRMSNLLGNYVTPVPAQQRLGPRWFAGSADAIHQSLNLVYDDAPDIVVVFGADHVYRMDPRQMVAQHLDSGAGVTVAGLRVPRSEGRAFGVIQTAPDGRTIEAFLEKPADPPGLPGSPEETFASMGNYVFSTDVLIDALRKDAADEDSVHDMGGNIIPMLVAQRAAAVYDFAGNVVPGTTVRDRGYWRDVGTVDSYFEAQMDLCALDPVFNLYNREWPILTSIPSLPPAKFVHDGLQRTGTAVNSIVSNGVIISGGTVRSSVLSPGVRVSSWAEVDHTVLMDNVLVGRGAVVRDAILDKNVHVPAGAQVGVDKDRDRARGYTVSEQGITVVGKGVTIAD.

Residues Gly-163, 179–180, and Ser-197 contribute to the alpha-D-glucose 1-phosphate site; that span reads EK.

This sequence belongs to the bacterial/plant glucose-1-phosphate adenylyltransferase family. As to quaternary structure, homotetramer.

The catalysed reaction is alpha-D-glucose 1-phosphate + ATP + H(+) = ADP-alpha-D-glucose + diphosphate. Its pathway is glycan biosynthesis; glycogen biosynthesis. In terms of biological role, involved in the biosynthesis of ADP-glucose, a building block required for the elongation reactions to produce glycogen. Catalyzes the reaction between ATP and alpha-D-glucose 1-phosphate (G1P) to produce pyrophosphate and ADP-Glc. In Frankia casuarinae (strain DSM 45818 / CECT 9043 / HFP020203 / CcI3), this protein is Glucose-1-phosphate adenylyltransferase.